Reading from the N-terminus, the 828-residue chain is Periplasmic nitrate reductase (828 aa).

The tat-type signal signal peptide spans 1 to 31 (MKLSRRSFMKANAVAAVAAAAGLSVPGVARA). One can recognise a 4Fe-4S Mo/W bis-MGD-type domain in the interval 39-95 (IKWDKAPCRFCGTGCGVLVGTQQGRVVACQGDPDAPVNRGLNCIKGYFLPKIMYGKD). The [4Fe-4S] cluster site is built by Cys46, Cys49, Cys53, and Cys81. Mo-bis(molybdopterin guanine dinucleotide) is bound by residues Lys83, Gln150, Asn175, Cys179, 212-219 (WGANMAEM), 243-247 (STYQH), 262-264 (QSD), Met372, Gln376, Asn482, 508-509 (SD), Lys531, Asp558, and 718-727 (TGRVLEHWHT). Phe794 contributes to the substrate binding site. Mo-bis(molybdopterin guanine dinucleotide)-binding residues include Asn802 and Lys819.

This sequence belongs to the prokaryotic molybdopterin-containing oxidoreductase family. NasA/NapA/NarB subfamily. As to quaternary structure, component of the periplasmic nitrate reductase NapAB complex composed of NapA and NapB. [4Fe-4S] cluster is required as a cofactor. The cofactor is Mo-bis(molybdopterin guanine dinucleotide). In terms of processing, predicted to be exported by the Tat system. The position of the signal peptide cleavage has not been experimentally proven.

It localises to the periplasm. The enzyme catalyses 2 Fe(II)-[cytochrome] + nitrate + 2 H(+) = 2 Fe(III)-[cytochrome] + nitrite + H2O. Its function is as follows. Catalytic subunit of the periplasmic nitrate reductase complex NapAB. Receives electrons from NapB and catalyzes the reduction of nitrate to nitrite. The protein is Periplasmic nitrate reductase of Shigella boydii serotype 4 (strain Sb227).